Here is a 176-residue protein sequence, read N- to C-terminus: ATP-dependent protease subunit HslV (176 aa).

Residue threonine 6 is part of the active site. The Na(+) site is built by serine 161, cysteine 164, and threonine 167.

The protein belongs to the peptidase T1B family. HslV subfamily. A double ring-shaped homohexamer of HslV is capped on each side by a ring-shaped HslU homohexamer. The assembly of the HslU/HslV complex is dependent on binding of ATP.

It localises to the cytoplasm. It carries out the reaction ATP-dependent cleavage of peptide bonds with broad specificity.. With respect to regulation, allosterically activated by HslU binding. Its function is as follows. Protease subunit of a proteasome-like degradation complex believed to be a general protein degrading machinery. The sequence is that of ATP-dependent protease subunit HslV from Thermosipho africanus (strain TCF52B).